Consider the following 269-residue polypeptide: Small ribosomal subunit protein uS2 (269 aa).

The protein belongs to the universal ribosomal protein uS2 family.

The polypeptide is Small ribosomal subunit protein uS2 (rpsB) (Synechocystis sp. (strain ATCC 27184 / PCC 6803 / Kazusa)).